The following is a 336-amino-acid chain: Transcription factor MYB29 (336 aa).

HTH myb-type domains follow at residues 9 to 65 and 66 to 116; these read GEGL…KPDI and KRGE…KKLL. DNA-binding regions (H-T-H motif) lie at residues 37 to 61 and 89 to 112; these read WRDI…ANYL and WSVI…NTHL. The disordered stretch occupies residues 127–170; sequence KPLAYDSNPDEQSQSGSISPKSLPPSSSKNVPEITSSDETPKYD. Residues 141 to 154 are compositionally biased toward low complexity; it reads SGSISPKSLPPSSS. The span at 155-164 shows a compositional bias: polar residues; sequence KNVPEITSSD.

In terms of assembly, can form complexes with MYC2, MYC3 or MYC4. As to expression, expressed in both vegetative and generative organs. Mostly present in seedlings, inflorescences, roots and stems, and, to a lower extent, in leaves (in midvein and trichomes) and siliques.

It localises to the nucleus. Functionally, plays a minor rheostat role in aliphatic glucosinolates (GLSs) biosynthesis, mostly short chained. Together with MYB28/HAG1 and MYB76/HAG2, promotes aliphatic glucosinolate biosynthesis but represses indolic glucosinolate biosynthesis. Prevents insect performance (e.g. lepidopteran insect Mamestra brassicae) by promoting glucosinolates. This chain is Transcription factor MYB29 (MYB29), found in Arabidopsis thaliana (Mouse-ear cress).